Reading from the N-terminus, the 342-residue chain is Glycerol-3-phosphate dehydrogenase [NAD(P)+] (342 aa).

The NADPH site is built by Trp-11, Arg-31, and Lys-102. Residues Lys-102 and Gly-132 each coordinate sn-glycerol 3-phosphate. Residue Ala-136 coordinates NADPH. 5 residues coordinate sn-glycerol 3-phosphate: Lys-187, Asp-240, Ser-250, Arg-251, and Asn-252. Lys-187 functions as the Proton acceptor in the catalytic mechanism. Arg-251 contacts NADPH. An NADPH-binding site is contributed by Glu-277.

This sequence belongs to the NAD-dependent glycerol-3-phosphate dehydrogenase family.

It is found in the cytoplasm. It carries out the reaction sn-glycerol 3-phosphate + NAD(+) = dihydroxyacetone phosphate + NADH + H(+). The catalysed reaction is sn-glycerol 3-phosphate + NADP(+) = dihydroxyacetone phosphate + NADPH + H(+). Its pathway is membrane lipid metabolism; glycerophospholipid metabolism. Functionally, catalyzes the reduction of the glycolytic intermediate dihydroxyacetone phosphate (DHAP) to sn-glycerol 3-phosphate (G3P), the key precursor for phospholipid synthesis. This Symbiobacterium thermophilum (strain DSM 24528 / JCM 14929 / IAM 14863 / T) protein is Glycerol-3-phosphate dehydrogenase [NAD(P)+].